A 238-amino-acid chain; its full sequence is Protein-lysine N-methyltransferase efm4 (238 aa).

This sequence belongs to the class I-like SAM-binding methyltransferase superfamily. EFM4 family.

It localises to the cytoplasm. Its subcellular location is the nucleus. Its function is as follows. S-adenosyl-L-methionine-dependent protein-lysine N-methyltransferase that mono- and dimethylates elongation factor 1-alpha at 'Lys-316'. May play a role in intracellular transport. This Schizosaccharomyces pombe (strain 972 / ATCC 24843) (Fission yeast) protein is Protein-lysine N-methyltransferase efm4.